The primary structure comprises 505 residues: Aspartyl/glutamyl-tRNA(Asn/Gln) amidotransferase subunit B (505 aa).

Residues 220-241 are disordered; sequence NVSLRPRPAPGDPDAPFGTRSE.

Belongs to the GatB/GatE family. GatB subfamily. Heterotrimer of A, B and C subunits.

The catalysed reaction is L-glutamyl-tRNA(Gln) + L-glutamine + ATP + H2O = L-glutaminyl-tRNA(Gln) + L-glutamate + ADP + phosphate + H(+). It carries out the reaction L-aspartyl-tRNA(Asn) + L-glutamine + ATP + H2O = L-asparaginyl-tRNA(Asn) + L-glutamate + ADP + phosphate + 2 H(+). Allows the formation of correctly charged Asn-tRNA(Asn) or Gln-tRNA(Gln) through the transamidation of misacylated Asp-tRNA(Asn) or Glu-tRNA(Gln) in organisms which lack either or both of asparaginyl-tRNA or glutaminyl-tRNA synthetases. The reaction takes place in the presence of glutamine and ATP through an activated phospho-Asp-tRNA(Asn) or phospho-Glu-tRNA(Gln). The chain is Aspartyl/glutamyl-tRNA(Asn/Gln) amidotransferase subunit B from Frankia casuarinae (strain DSM 45818 / CECT 9043 / HFP020203 / CcI3).